The primary structure comprises 138 residues: Ribosome-binding factor A (138 aa).

Belongs to the RbfA family. Monomer. Binds 30S ribosomal subunits, but not 50S ribosomal subunits or 70S ribosomes.

It is found in the cytoplasm. Functionally, one of several proteins that assist in the late maturation steps of the functional core of the 30S ribosomal subunit. Associates with free 30S ribosomal subunits (but not with 30S subunits that are part of 70S ribosomes or polysomes). Required for efficient processing of 16S rRNA. May interact with the 5'-terminal helix region of 16S rRNA. This chain is Ribosome-binding factor A, found in Pseudoalteromonas atlantica (strain T6c / ATCC BAA-1087).